The chain runs to 272 residues: Imidazole glycerol phosphate synthase subunit HisF (272 aa).

Residues Asp-11 and Asp-130 contribute to the active site.

The protein belongs to the HisA/HisF family. As to quaternary structure, heterodimer of HisH and HisF.

Its subcellular location is the cytoplasm. It catalyses the reaction 5-[(5-phospho-1-deoxy-D-ribulos-1-ylimino)methylamino]-1-(5-phospho-beta-D-ribosyl)imidazole-4-carboxamide + L-glutamine = D-erythro-1-(imidazol-4-yl)glycerol 3-phosphate + 5-amino-1-(5-phospho-beta-D-ribosyl)imidazole-4-carboxamide + L-glutamate + H(+). It participates in amino-acid biosynthesis; L-histidine biosynthesis; L-histidine from 5-phospho-alpha-D-ribose 1-diphosphate: step 5/9. Its function is as follows. IGPS catalyzes the conversion of PRFAR and glutamine to IGP, AICAR and glutamate. The HisF subunit catalyzes the cyclization activity that produces IGP and AICAR from PRFAR using the ammonia provided by the HisH subunit. The sequence is that of Imidazole glycerol phosphate synthase subunit HisF from Methanococcus maripaludis (strain C7 / ATCC BAA-1331).